The sequence spans 422 residues: Fasciclin-like arabinogalactan protein 10 (422 aa).

The first 25 residues, 1 to 25 (MATSRAFTLFAFTLSLLTVASTVSG), serve as a signal peptide directing secretion. 2 FAS1 domains span residues 26-172 (HNIT…NAPI) and 187-327 (GVSN…DNVL). N-linked (GlcNAc...) asparagine glycosylation is found at N27, N128, N162, N190, and N244. The disordered stretch occupies residues 336–397 (SSSPAPAPEP…PTSSENSNAK (62 aa)). The segment covering 340 to 374 (APAPEPVSAPTPTPAKSPSPVEAPSPTAASPPAPP) has biased composition (pro residues). Positions 386–397 (DSPTSSENSNAK) are enriched in polar residues. N398 carries GPI-anchor amidated asparagine lipidation. A propeptide spans 399–422 (AAFHVNAPALFTALVTIAATSLLL) (removed in mature form).

This sequence belongs to the fasciclin-like AGP family.

The protein localises to the cell membrane. May be a cell surface adhesion protein. The sequence is that of Fasciclin-like arabinogalactan protein 10 (FLA10) from Arabidopsis thaliana (Mouse-ear cress).